Here is a 116-residue protein sequence, read N- to C-terminus: Mercuric transport protein MerT (116 aa).

2 helical membrane-spanning segments follow: residues 16-36 (LAAI…ALGF) and 46-66 (VLEP…FFAW). Hg(2+)-binding residues include C24 and C25. Hg(2+) contacts are provided by C76 and C82. Residues 94–114 (IFWFVAVLVLVALGFPYVMPF) traverse the membrane as a helical segment.

The protein belongs to the MerT family.

The protein resides in the cell inner membrane. Its function is as follows. Involved in mercury resistance. Probably transfers a mercuric ion from the periplasmic Hg(2+)-binding protein MerP to the cytoplasmic mercuric reductase MerA. The polypeptide is Mercuric transport protein MerT (Acinetobacter calcoaceticus).